Reading from the N-terminus, the 249-residue chain is MTLSEESHLPKHVAIIMDGNNRFAKKNQMQKGDGHREGKNSLDPIVEHCCTRGVQALTVFAFSSENWNRPAFEVDLLMKLLEEAIHEQLPRMRKFNIALRFIGDRSKLSEHLTDLMTHAENETAHFTSMTLTIAISYGGMWDITDAAKQIAKDVSDGIVDIEQIDTHLFGRYVSLNQLPPVDLLIRTGGDYRLSNFLLWQAAYAELYFTETLWPEFSIDEFDHALAVFAGRERRFGKTSEQIQQDKIEN.

Residue Asp-18 is part of the active site. A Mg(2+)-binding site is contributed by Asp-18. Residues 19 to 22 (GNNR), Phe-23, Lys-31, His-35, and 63 to 65 (SSE) each bind substrate. Asn-66 (proton acceptor) is an active-site residue. Residues Trp-67, Arg-69, Arg-186, and 192-194 (RLS) each bind substrate. Glu-205 provides a ligand contact to Mg(2+).

This sequence belongs to the UPP synthase family. Homodimer. The cofactor is Mg(2+).

It carries out the reaction 8 isopentenyl diphosphate + (2E,6E)-farnesyl diphosphate = di-trans,octa-cis-undecaprenyl diphosphate + 8 diphosphate. Catalyzes the sequential condensation of isopentenyl diphosphate (IPP) with (2E,6E)-farnesyl diphosphate (E,E-FPP) to yield (2Z,6Z,10Z,14Z,18Z,22Z,26Z,30Z,34E,38E)-undecaprenyl diphosphate (di-trans,octa-cis-UPP). UPP is the precursor of glycosyl carrier lipid in the biosynthesis of bacterial cell wall polysaccharide components such as peptidoglycan and lipopolysaccharide. The chain is Ditrans,polycis-undecaprenyl-diphosphate synthase ((2E,6E)-farnesyl-diphosphate specific) from Acinetobacter baylyi (strain ATCC 33305 / BD413 / ADP1).